The primary structure comprises 254 residues: Cdc42 effector protein 3 (254 aa).

A CRIB domain is found at 31 to 45 (ISPPLGDFRHTIHIG). Tyr-63 is modified (phosphotyrosine). A phosphoserine mark is found at Ser-89, Ser-108, and Ser-144. Positions 165–205 (VHQGDTSWGSSGSGSQSSQGRDSHSSSLSEQSSDWPADDMF) are disordered. Residues 171–197 (SWGSSGSGSQSSQGRDSHSSSLSEQSS) show a composition bias toward low complexity.

This sequence belongs to the BORG/CEP family. Interacts with RHOQ and CDC42, in a GTP-dependent manner, and with SEPT7.

Its subcellular location is the endomembrane system. It localises to the cytoplasm. It is found in the cytoskeleton. Its function is as follows. Probably involved in the organization of the actin cytoskeleton. May act downstream of CDC42 to induce actin filament assembly leading to cell shape changes. Induces pseudopodia formation in fibroblasts. The chain is Cdc42 effector protein 3 (Cdc42ep3) from Mus musculus (Mouse).